We begin with the raw amino-acid sequence, 281 residues long: AB hydrolase superfamily protein YclE (281 aa).

One can recognise an AB hydrolase-1 domain in the interval 30 to 268 (SAVYYPRLFS…SGHQPMLEEP (239 aa)). S95 serves as the catalytic Nucleophile. Residue D232 is part of the active site. H261 functions as the Proton donor in the catalytic mechanism.

It belongs to the AB hydrolase superfamily.

The protein is AB hydrolase superfamily protein YclE (yclE) of Bacillus subtilis (strain 168).